The sequence spans 257 residues: 1-(5-phosphoribosyl)-5-[(5-phosphoribosylamino)methylideneamino] imidazole-4-carboxamide isomerase (257 aa).

Catalysis depends on Asp8, which acts as the Proton acceptor. Asp129 acts as the Proton donor in catalysis.

The protein belongs to the HisA/HisF family.

The protein resides in the cytoplasm. The catalysed reaction is 1-(5-phospho-beta-D-ribosyl)-5-[(5-phospho-beta-D-ribosylamino)methylideneamino]imidazole-4-carboxamide = 5-[(5-phospho-1-deoxy-D-ribulos-1-ylimino)methylamino]-1-(5-phospho-beta-D-ribosyl)imidazole-4-carboxamide. The protein operates within amino-acid biosynthesis; L-histidine biosynthesis; L-histidine from 5-phospho-alpha-D-ribose 1-diphosphate: step 4/9. This is 1-(5-phosphoribosyl)-5-[(5-phosphoribosylamino)methylideneamino] imidazole-4-carboxamide isomerase from Crocosphaera subtropica (strain ATCC 51142 / BH68) (Cyanothece sp. (strain ATCC 51142)).